The chain runs to 146 residues: Hemoglobin subunit beta (146 aa).

N-acetylvaline is present on V1. A Globin domain is found at H2–H146. S44 carries the post-translational modification Phosphoserine. K59 carries the N6-acetyllysine modification. H63 lines the heme b pocket. An N6-acetyllysine modification is found at K82. H92 provides a ligand contact to heme b. C93 carries the post-translational modification S-nitrosocysteine. K144 bears the N6-acetyllysine mark.

It belongs to the globin family. Heterotetramer of two alpha chains and two beta chains. As to expression, red blood cells.

Its function is as follows. Involved in oxygen transport from the lung to the various peripheral tissues. The chain is Hemoglobin subunit beta (HBB) from Spermophilus citellus (European ground squirrel).